The sequence spans 1317 residues: WASH complex subunit 2 (1317 aa).

Positions 1–219 are sufficient for interaction with WASHC3, WASHC4 and WASHC5; required for interaction with WASHC1; that stretch reads MNRTSPDSER…VGSDRGSIVD (219 aa). Phosphoserine occurs at positions 157, 159, 204, 205, and 209. Positions 201–213 are enriched in low complexity; sequence GELSSEEGSVGSD. The segment at 201 to 630 is disordered; the sequence is GELSSEEGSV…RKSKGELWDS (430 aa). Composition is skewed to acidic residues over residues 219–232 and 250–274; these read DSEE…SDED and DEEE…EDIE. Ser-284 is modified (phosphoserine). 2 stretches are compositionally biased toward basic and acidic residues: residues 289–325 and 366–376; these read LAAR…RTPP and DLFRETSRDRP. Thr-323 bears the Phosphothreonine mark. Positions 348-582 are sufficient for interaction with CCDC93; it reads SRGGLFSGQG…QVSSQQPQSQ (235 aa). Residues 349–1317 form an interaction with VPS35 region; sequence RGGLFSGQGL…DDPLNAFGSQ (969 aa). Residues 358–368 carry the LFa 1 motif; it reads LFDDEDESDLF. The segment covering 379–399 has biased composition (low complexity); that stretch reads APVSEESSSPKPGKKIPAGAV. Phosphoserine is present on residues Ser-385 and Ser-387. Short sequence motifs (LFa) lie at residues 433–445 and 464–473; these read LFDD…DNFF and IFDDEEGDLF. Positions 500–518 are enriched in polar residues; sequence TLPSSKNPKLVSETKTQKG. 2 consecutive short sequence motifs (LFa) follow at residues 519-530 and 554-565; these read LFSDEEDSEDLF and LFGDEDEEDNLF. Residues Ser-521 and Ser-526 each carry the phosphoserine modification. Residues 529-548 show a composition bias toward low complexity; the sequence is LFSSQNSSKSKSASLLSSQL. The span at 569 to 582 shows a compositional bias: low complexity; the sequence is PAKKQVSSQQPQSQ. A compositionally biased stretch (basic and acidic residues) spans 583–592; the sequence is EKPKPSEQPK. Positions 599–611 match the LFa 6 motif; the sequence is LFSSDEEDQWNIT. Residues Ser-601 and Ser-602 each carry the phosphoserine modification. Positions 613–627 are enriched in basic and acidic residues; that stretch reads SHTKLATDRKSKGEL. 2 consecutive short sequence motifs (LFa) follow at residues 646 to 657 and 673 to 685; these read LFEEDDDEADLF and LFED…SSLF. The disordered stretch occupies residues 667–817; it reads TQRTSLLFED…GRPKSTGVFQ (151 aa). Ser-710 carries the post-translational modification Phosphoserine. Positions 717–744 are enriched in basic and acidic residues; that stretch reads VPSRVKSVDVKVGNGKEADVAKVTEKEG. Ser-763 and Ser-778 each carry phosphoserine. Positions 788–810 are enriched in basic and acidic residues; sequence EDQSNTHVSKNDAEKGLKTDGRP. 2 short sequence motifs (LFa) span residues 815-823 and 832-838; these read VFQDEELLF and DPDVDLF. Residue Ser-853 is modified to Phosphoserine. The LFa 11 signature appears at 854–864; the sequence is LFGDDEDYDLF. Disordered regions lie at residues 867–926 and 960–1079; these read AKTQ…REPS and ELAF…AAPP. The span at 874–906 shows a compositional bias: basic and acidic residues; that stretch reads PEKKGALKKDRPVSLKNEEAPESTEGSKEKSLW. An interaction with phospholipids region spans residues 912–1317; that stretch reads QDSSGLTPFK…DDPLNAFGSQ (406 aa). Basic residues predominate over residues 1003-1021; that stretch reads NKSRVKVRGKRRPQTRAAR. Residues 1004–1022 are required for interaction with F-actin-capping protein subunit alpha (CAPZA1 or CAPZA2 or CAPZA3); the sequence is KSRVKVRGKRRPQTRAARR. 4 positions are modified to phosphoserine: Ser-1029, Ser-1047, Ser-1064, and Ser-1092. The short motif at 1107 to 1114 is the LFa 12 element; sequence LFDSGDIF. Residues 1119–1141 form a disordered region; sequence GSQSMEGTKVKAAETPAHLSGGS. 6 consecutive short sequence motifs (LFa) follow at residues 1147 to 1161, 1177 to 1185, 1210 to 1216, 1238 to 1246, 1266 to 1275, and 1306 to 1314; these read VFPA…DDLF, LLEDEDDLF, IFEDDIF, LFDDNIDIF, VFDDDTDDIF, and IFDDPLNAF. Phosphoserine is present on residues Ser-1152, Ser-1155, and Ser-1156. The tract at residues 1158-1183 is disordered; the sequence is DDLFQTVKPRPAKKRNPFPLLEDEDD. Positions 1277-1317 are disordered; that stretch reads SGLQAKKSKPKSQSAEATSELRSDHKVSNIFDDPLNAFGSQ. Residue Ser-1316 is modified to Phosphoserine.

This sequence belongs to the FAM21 family. Component of the WASH core complex also described as WASH regulatory complex SHRC composed of WASHC1, WASHC2, WASHC3, WASHC4 and WASHC5; in the complex interacts (via N-terminus) directly with WASHC1. The WASH core complex associates via WASHC2 with the F-actin-capping protein dimer (formed by CAPZA1, CAPZA2 or CAPZA3 and CAPZB) in a transient or substoichiometric manner which was initially described as WASH complex. Interacts with VPS35; mediates the association with the retromer CSC complex. Interacts with FKBP15. Interacts with CCDC93, CCDC22, C16orf62 homolog; indicative for an association of the WASH core complex with the CCC complex. Directly interacts with TBC1D23.

The protein resides in the early endosome membrane. The protein localises to the cell membrane. In terms of biological role, acts as a component of the WASH core complex that functions as a nucleation-promoting factor (NPF) at the surface of endosomes, where it recruits and activates the Arp2/3 complex to induce actin polymerization, playing a key role in the fission of tubules that serve as transport intermediates during endosome sorting. Mediates the recruitment of the WASH core complex to endosome membranes via binding to phospholipids and VPS35 of the retromer CSC. Mediates the recruitment of the F-actin-capping protein dimer to the WASH core complex probably promoting localized F-actin polymerization needed for vesicle scission. Via its C-terminus binds various phospholipids, most strongly phosphatidylinositol 4-phosphate (PtdIns-(4)P), phosphatidylinositol 5-phosphate (PtdIns-(5)P) and phosphatidylinositol 3,5-bisphosphate (PtdIns-(3,5)P2). Involved in the endosome-to-plasma membrane trafficking and recycling of SNX27-retromer-dependent cargo proteins, such as GLUT1. Required for the association of DNAJC13, ENTR1, ANKRD50 with retromer CSC subunit VPS35. Required for the endosomal recruitment of CCC complex subunits COMMD1, CCDC93 and C16orf62 homolog. The chain is WASH complex subunit 2 from Cricetulus griseus (Chinese hamster).